The chain runs to 316 residues: tRNA uridine(34) hydroxylase (316 aa).

The Rhodanese domain maps to Leu-123–Glu-217. The active-site Cysteine persulfide intermediate is the Cys-177.

This sequence belongs to the TrhO family.

It catalyses the reaction uridine(34) in tRNA + AH2 + O2 = 5-hydroxyuridine(34) in tRNA + A + H2O. Catalyzes oxygen-dependent 5-hydroxyuridine (ho5U) modification at position 34 in tRNAs. The protein is tRNA uridine(34) hydroxylase of Enterococcus faecalis (strain ATCC 700802 / V583).